The primary structure comprises 78 residues: Large ribosomal subunit protein bL28 (78 aa).

The interval 1-30 is disordered; it reads MAAHCQVTGAQPGFGHSISHSHRRTKRRWN. A compositionally biased stretch (basic residues) spans 19–30; sequence SHSHRRTKRRWN.

It belongs to the bacterial ribosomal protein bL28 family.

The polypeptide is Large ribosomal subunit protein bL28 (Kocuria rhizophila (strain ATCC 9341 / DSM 348 / NBRC 103217 / DC2201)).